A 523-amino-acid chain; its full sequence is Cytochrome P450 52A3-A (523 aa).

A helical membrane pass occupies residues 17–34 (WYTILFGAAVTYFLSIAL). C471 serves as a coordination point for heme.

This sequence belongs to the cytochrome P450 family. The cofactor is heme.

It is found in the membrane. In terms of biological role, together with an NADPH cytochrome P450 the enzyme system catalyzes the terminal hydroxylation as the first step in the assimilation of alkanes and fatty acids. The sequence is that of Cytochrome P450 52A3-A (CYP52A3-A) from Candida maltosa (Yeast).